The following is a 259-amino-acid chain: MRIALGLEYDGSNFSGWQSQKGVRTVQATLEQALSAVANEPVTVITAGRTDAGVHAAAQVVHFDTATFRLEHNWVFGGNANLLPEVAILWAQPVNEAFHARFSAIARHYRYIILNRGARPAIANRRVTWYCQPLSVTKMKEAGAFLVGEHDFSSFRAKACQAKSPVRNVHYLEVTRQGDWIVIDISANAFLHHMVRNIAGVLMAIGKGEQPPRWAEEVLQARCRAVGGVTARPDGLYLVRVDYPDHFDLPRLSRPVTVW.

Catalysis depends on Asp-51, which acts as the Nucleophile. Residue Tyr-109 participates in substrate binding.

It belongs to the tRNA pseudouridine synthase TruA family. In terms of assembly, homodimer.

The enzyme catalyses uridine(38/39/40) in tRNA = pseudouridine(38/39/40) in tRNA. Its function is as follows. Formation of pseudouridine at positions 38, 39 and 40 in the anticodon stem and loop of transfer RNAs. This Nitrosococcus oceani (strain ATCC 19707 / BCRC 17464 / JCM 30415 / NCIMB 11848 / C-107) protein is tRNA pseudouridine synthase A.